Reading from the N-terminus, the 1257-residue chain is Period circadian protein homolog 2 (1257 aa).

The interval 1–60 (MNGYVDFSPSPTSPTKEPGAPQPTQAVLQEDVDMSSGSSGNENCSTGRDSQGSDCDDNGK) is disordered. The segment covering 35 to 53 (SSGSSGNENCSTGRDSQGS) has biased composition (polar residues). A Nuclear export signal 1 motif is present at residues 109 to 118 (LIRTLKELKV). Residues 179 to 246 (ITSEYIVKNA…FHSYTTPYKL (68 aa)) enclose the PAS 1 domain. An LXXLL motif is present at residues 306–310 (LCCLL). The region spanning 319 to 385 (YEAPRIPPEK…MLAIHKKILQ (67 aa)) is the PAS 2 domain. The 44-residue stretch at 393–436 (YSPIRFRTRNGEYITLDTSWSSFINPWSRKISFIIGRHKVRVGP) folds into the PAC domain. A Nuclear export signal 2 motif is present at residues 460–469 (LTEQIHRLLM). Disordered stretches follow at residues 471–565 (PVPH…GASL) and 617–638 (PSRKATVSPGLHSGEAARPSKV). The tract at residues 478–482 (SGYGS) is important for protein stability. The span at 493–504 (MSQTSSSDSNGQ) shows a compositional bias: polar residues. A CSNK1E binding domain region spans residues 510 to 709 (RRSGIFKTSG…GAAGGLSQEK (200 aa)). Phosphoserine occurs at positions 525, 528, 531, 538, and 544. Thr-554 is subject to Phosphothreonine. 6 positions are modified to phosphoserine: Ser-659, Ser-693, Ser-697, Ser-706, Ser-758, and Ser-763. The segment at 757–832 (RSRAQASDRG…SDTSQSSCPS (76 aa)) is disordered. Positions 778 to 794 (KKTGKNRKLKSKRVKTR) match the Nuclear localization signal motif. Residues 779–792 (KTGKNRKLKSKRVK) show a composition bias toward basic residues. Residues 821–832 (SPSDTSQSSCPS) show a composition bias toward low complexity. A Phosphothreonine modification is found at Thr-858. Residues 882 to 1067 (EFAVQPLPFA…DLCSATGSAL (186 aa)) form an interaction with PPARG region. Ser-939 is modified (phosphoserine). Thr-964 is subject to Phosphothreonine. Ser-971 is modified (phosphoserine). Residues 983 to 990 (LQLNLLQL) carry the Nuclear export signal 3 motif. A disordered region spans residues 994 to 1044 (PEGSTGAAGTLGTTGTAASGLDCTSGTSRDRQPKAPPTCNEPSDTQNSDAI). Residues 996–1014 (GSTGAAGTLGTTGTAASGL) are compositionally biased toward low complexity. Polar residues predominate over residues 1033-1044 (NEPSDTQNSDAI). An LXXLL motif is present at residues 1051–1055 (LNLLL). A compositionally biased stretch (low complexity) spans 1070–1092 (SGASATSDSLGSSSLGFGTSQSG). The disordered stretch occupies residues 1070-1115 (SGASATSDSLGSSSLGFGTSQSGAGSSDTSHTSKYFGSIDSSENNH). Over residues 1093-1111 (AGSSDTSHTSKYFGSIDSS) the composition is skewed to polar residues. Ser-1126 bears the Phosphoserine mark. The interval 1157 to 1257 (SRDLQAVLKE…LTGPRIEAQT (101 aa)) is CRY binding domain. The disordered stretch occupies residues 1224-1257 (PYEEDSPSPGLCDTSEAKEEEGEQLTGPRIEAQT).

In terms of assembly, homodimer. Component of the circadian core oscillator, which includes the CRY proteins, CLOCK or NPAS2, BMAL1 or BMAL2, CSNK1D and/or CSNK1E, TIMELESS, and the PER proteins. Interacts with CLOCK-BMAL1 (off DNA). Interacts with BMAL2. Interacts directly with PER1 and PER3, and through a C-terminal domain, with CRY1 and CRY2. Interacts (via PAS 2 domain) with TIMELESS. Interacts with NFIL3. Different large complexes have been identified with different repressive functions. The core of PER complexes is composed of at least PER1, PER2, PER3, CRY1, CRY2, CSNK1D and/or CSNK1E. The large PER complex involved in the repression of transcriptional termination is composed of at least PER2, CDK9, DDX5, DHX9, NCBP1 and POLR2A (active). The large PER complex involved in the histone deacetylation is composed of at least HDAC1, PER2, SFPQ and SIN3A. The large PER complex involved in the histone methylation is composed of at least PER2, CBX3, TRIM28, SUV39H1 and/or SUV39H2; CBX3 mediates the formation of the complex. Interacts with SETX; the interaction inhibits termination of circadian target genes. Interacts with the nuclear receptors HNF4A, NR1D1, NR4A2, RORA, PPARA, PPARG and THRA; the interaction with at least PPARG is ligand dependent. Interacts with PML. Interacts (phosphorylated) with BTRC and FBXW11; the interactions trigger proteasomal degradation. Interacts with NONO and SFPQ. Interacts with CAVIN3. Interacts with MAGEL2. Interacts with MAP1LC3B. Interacts with HNF4A. Post-translationally, acetylated. Deacetylated by SIRT1, resulting in decreased protein stability. Deacetylated by SIRT6, preventing its degradation by the proteasome, resulting in increased protein stability. Phosphorylated by CSNK1E and CSNK1D. Phosphorylation results in PER2 protein degradation. May be dephosphorylated by PP1. In terms of processing, ubiquitinated, leading to its proteasomal degradation. Ubiquitination may be inhibited by CRY1. In the brain, high expression in SCN during the subjective day. Constitutive expression in the cornu ammonis and in the dentate gyrus of the hippocampus. Also expressed in the piriform cortex and the glomeruli of the olfactory bulb, and at a lower extent in the cerebral cortex. Not expressed in the pars tuberalis and the Purkinje neurons. Also expressed in adipose tissue (white and brown), heart, kidney, bladder, lumbar spinal cord, skeletal muscle, spleen, lung, pancreas and liver with highest levels in skeletal muscle and liver and lowest levels in spleen.

It localises to the nucleus. It is found in the cytoplasm. Its subcellular location is the perinuclear region. Functionally, transcriptional repressor which forms a core component of the circadian clock. The circadian clock, an internal time-keeping system, regulates various physiological processes through the generation of approximately 24 hour circadian rhythms in gene expression, which are translated into rhythms in metabolism and behavior. It is derived from the Latin roots 'circa' (about) and 'diem' (day) and acts as an important regulator of a wide array of physiological functions including metabolism, sleep, body temperature, blood pressure, endocrine, immune, cardiovascular, and renal function. Consists of two major components: the central clock, residing in the suprachiasmatic nucleus (SCN) of the brain, and the peripheral clocks that are present in nearly every tissue and organ system. Both the central and peripheral clocks can be reset by environmental cues, also known as Zeitgebers (German for 'timegivers'). The predominant Zeitgeber for the central clock is light, which is sensed by retina and signals directly to the SCN. The central clock entrains the peripheral clocks through neuronal and hormonal signals, body temperature and feeding-related cues, aligning all clocks with the external light/dark cycle. Circadian rhythms allow an organism to achieve temporal homeostasis with its environment at the molecular level by regulating gene expression to create a peak of protein expression once every 24 hours to control when a particular physiological process is most active with respect to the solar day. Transcription and translation of core clock components (CLOCK, NPAS2, BMAL1, BMAL2, PER1, PER2, PER3, CRY1 and CRY2) plays a critical role in rhythm generation, whereas delays imposed by post-translational modifications (PTMs) are important for determining the period (tau) of the rhythms (tau refers to the period of a rhythm and is the length, in time, of one complete cycle). A diurnal rhythm is synchronized with the day/night cycle, while the ultradian and infradian rhythms have a period shorter and longer than 24 hours, respectively. Disruptions in the circadian rhythms contribute to the pathology of cardiovascular diseases, cancer, metabolic syndrome and aging. A transcription/translation feedback loop (TTFL) forms the core of the molecular circadian clock mechanism. Transcription factors, CLOCK or NPAS2 and BMAL1 or BMAL2, form the positive limb of the feedback loop, act in the form of a heterodimer and activate the transcription of core clock genes and clock-controlled genes (involved in key metabolic processes), harboring E-box elements (5'-CACGTG-3') within their promoters. The core clock genes: PER1/2/3 and CRY1/2 which are transcriptional repressors form the negative limb of the feedback loop and interact with the CLOCK|NPAS2-BMAL1|BMAL2 heterodimer inhibiting its activity and thereby negatively regulating their own expression. This heterodimer also activates nuclear receptors NR1D1/2 and RORA/B/G, which form a second feedback loop and which activate and repress BMAL1 transcription, respectively. PER1 and PER2 proteins transport CRY1 and CRY2 into the nucleus with appropriate circadian timing, but also contribute directly to repression of clock-controlled target genes through interaction with several classes of RNA-binding proteins, helicases and others transcriptional repressors. PER appears to regulate circadian control of transcription by at least three different modes. First, interacts directly with the CLOCK-BMAL1 at the tail end of the nascent transcript peak to recruit complexes containing the SIN3-HDAC that remodel chromatin to repress transcription. Second, brings H3K9 methyltransferases such as SUV39H1 and SUV39H2 to the E-box elements of the circadian target genes, like PER2 itself or PER1. The recruitment of each repressive modifier to the DNA seems to be very precisely temporally orchestrated by the large PER complex, the deacetylases acting before than the methyltransferases. Additionally, large PER complexes are also recruited to the target genes 3' termination site through interactions with RNA-binding proteins and helicases that may play a role in transcription termination to regulate transcription independently of CLOCK-BMAL1 interactions. Recruitment of large PER complexes to the elongating polymerase at PER and CRY termination sites inhibited SETX action, impeding RNA polymerase II release and thereby repressing transcriptional reinitiation. May propagate clock information to metabolic pathways via the interaction with nuclear receptors. Coactivator of PPARA and corepressor of NR1D1, binds rhythmically at the promoter of nuclear receptors target genes like BMAL1 or G6PC1. Directly and specifically represses PPARG proadipogenic activity by blocking PPARG recruitment to target promoters and thereby transcriptional activation. Required for fatty acid and lipid metabolism, is involved as well in the regulation of circulating insulin levels. Plays an important role in the maintenance of cardiovascular functions through the regulation of NO and vasodilatatory prostaglandins production in aortas. Controls circadian glutamate uptake in synaptic vesicles through the regulation of VGLUT1 expression. May also be involved in the regulation of inflammatory processes. Represses the CLOCK-BMAL1 induced transcription of BHLHE40/DEC1 and ATF4. Negatively regulates the formation of the TIMELESS-CRY1 complex by competing with TIMELESS for binding to CRY1. The chain is Period circadian protein homolog 2 (Per2) from Mus musculus (Mouse).